Reading from the N-terminus, the 447-residue chain is Glutamate--tRNA ligase 1 (447 aa).

Residues 10–20 carry the 'HIGH' region motif; that stretch reads PSPTGMLHVGN. Residues 240–244 carry the 'KMSKS' region motif; sequence KISKR. Lysine 243 provides a ligand contact to ATP.

The protein belongs to the class-I aminoacyl-tRNA synthetase family. Glutamate--tRNA ligase type 1 subfamily. Monomer.

The protein localises to the cytoplasm. The enzyme catalyses tRNA(Glu) + L-glutamate + ATP = L-glutamyl-tRNA(Glu) + AMP + diphosphate. Catalyzes the attachment of glutamate to tRNA(Glu) in a two-step reaction: glutamate is first activated by ATP to form Glu-AMP and then transferred to the acceptor end of tRNA(Glu). The sequence is that of Glutamate--tRNA ligase 1 from Rickettsia felis (strain ATCC VR-1525 / URRWXCal2) (Rickettsia azadi).